A 189-amino-acid polypeptide reads, in one-letter code: MLERLKDSLVNSPVIKRGEYNYFIHPISDGVPSIDPRLIEEIANYIIRIADMDVDTILTIEAMGIPVANALSLKTGIPLTIVRKRPYFLEGEVELSQSTGYSKGVLYINGLKKGDRVVIVDDVISTGGTLLALVKALQNMGVEITDVISVIGRGAGYFKLRELGVEPKILVTIDVSEKGVEIQDVFGDQ.

This sequence belongs to the purine/pyrimidine phosphoribosyltransferase family. Archaeal HPRT subfamily. Homodimer.

It is found in the cytoplasm. The catalysed reaction is IMP + diphosphate = hypoxanthine + 5-phospho-alpha-D-ribose 1-diphosphate. The enzyme catalyses GMP + diphosphate = guanine + 5-phospho-alpha-D-ribose 1-diphosphate. Its pathway is purine metabolism; IMP biosynthesis via salvage pathway; IMP from hypoxanthine: step 1/1. Functionally, catalyzes a salvage reaction resulting in the formation of IMP that is energically less costly than de novo synthesis. This is Hypoxanthine/guanine phosphoribosyltransferase (hpt) from Methanosarcina acetivorans (strain ATCC 35395 / DSM 2834 / JCM 12185 / C2A).